Consider the following 245-residue polypeptide: Adapter protein MecA (245 aa).

This sequence belongs to the MecA family. In terms of assembly, homodimer.

Its function is as follows. Enables the recognition and targeting of unfolded and aggregated proteins to the ClpC protease or to other proteins involved in proteolysis. This is Adapter protein MecA from Streptococcus pneumoniae serotype 4 (strain ATCC BAA-334 / TIGR4).